The primary structure comprises 306 residues: MPLDPEVRNFLQVYYKANIIDFTKYQFQEIRQKVNELLAKAVPKDPVGETRDMKIKLEDYELPIRIYSPIKRTNNGLVMHFHGGAWILGSIETEDAISRILSNSCECTVISVDYRLAPEYKFPTAVYDCFNAIVWARDNAGELGIDKDKIATFGISAGGNLVAATSLLARDNKLKLTAQVPVVPFVYLDLASKSMNRYRKGYFLDINLPVDYGVKMYIRDEKDLYNPLFSPLIAEDLSNLPQAIVVTAEYDPLRDQGEAYAYRLMESGVPTLSFRVNGNVHAFLGSPRTSRQVTVMIGALLKDIFK.

Positions His82–Gly84 match the Involved in the stabilization of the negatively charged intermediate by the formation of the oxyanion hole motif. Residues Ser156, Asp251, and His281 contribute to the active site.

Monomer.

The catalysed reaction is a phenyl acetate + H2O = a phenol + acetate + H(+). It catalyses the reaction An aryl dialkyl phosphate + H2O = dialkyl phosphate + an aryl alcohol.. Its activity is regulated as follows. Completely inhibited by chemical modifiers that are specific to Cys (HgCl(2) and p-chloromercuribenzoic acid), His (diethyl pyrocarbonate) and Ser (diisopropyl fluorophosphate and phenylmethanesulfonyl fluoride). No significant effect with chemical modifiers specific to Lys (pyridoxal 5'-phosphate) and Arg (phenylglyoxal). Not inhibited by inhibitors of A-esterases (paraoxon) or C-esterases (physostigmine/eserine). Activity is also not effected by incubation with 5 mM divalent cations for 30 minutes at 30 degrees Celsius or with 10 mM EDTA for 60 minutes at 75 degrees Celsius. In terms of biological role, has a broad substrate specificity. Hydrolyzes various p-nitrophenyl phosphates, aromatic esters and p-nitrophenyl fatty acids in vitro. Most active against paraoxon, phenyl acetate and p-nitrophenyl caproate (C6), respectively. Also has tributyrinase activity, but shows no hydrolytic activity toward other triacylglycerols including tricaprylin, trimyristin, tripalmitin or triolein in vitro. This chain is Arylesterase, found in Saccharolobus solfataricus (Sulfolobus solfataricus).